The following is a 563-amino-acid chain: RUN and FYVE domain-containing protein 4 (563 aa).

In terms of domain architecture, RUN spans 33–166 (TETSAELHRL…VAFNLDLQRP (134 aa)). Disordered regions lie at residues 176–327 (SESR…TTEG) and 375–397 (KKSS…MQED). Composition is skewed to basic and acidic residues over residues 196–205 (GFPEEVRCSR) and 263–284 (ETER…RKFL). The span at 285–295 (ENSTASIQQQR) shows a compositional bias: polar residues. The segment covering 297–312 (RAKDVKMQLTGRKVEG) has biased composition (basic and acidic residues). The segment covering 385-396 (EWTGVTSGTMQE) has biased composition (polar residues). The stretch at 421 to 462 (QAQCQEQLRAQEAELQALQEQLSRCQKERALLQVKLEQKQQE) forms a coiled coil. Residues 428–558 (LRAQEAELQA…RCCPTCAQQE (131 aa)) form an FYVE-type zinc finger. Positions 513, 516, 529, 532, 537, 540, 551, and 554 each coordinate Zn(2+).

Forms homodimers (via coiled coil domain). Forms a ternary complex with RAB7A and LAMP2; the interaction with RAB7A is mediated by RUFY4 (via RUN and coiled coil domains). Interacts with GTP-, but not GDP-bound ARL8A and ARL8B. Interacts with dynactin/DCTN1 and the dynein intermediate chain DYNC1I1/2. As to expression, expressed in dendritic cells.

The protein localises to the cytoplasmic vesicle. Its subcellular location is the autophagosome. It localises to the lysosome. Functionally, ARL8 effector that promotes the coupling of endolysosomes to dynein-dynactin for retrograde transport along microtubules. Acts by binding both GTP-bound ARL8 and dynein-dynactin. In nonneuronal cells, promotes concentration of endolysosomes in the juxtanuclear area. In hippocampal neurons, drives retrograde transport of endolysosomes from the axon to the soma. Positive regulator of macroautophagy in dendritic cells. Increases autophagic flux, probably by stimulating both autophagosome formation and facilitating tethering with lysosomes. Binds to phosphatidylinositol 3-phosphate (PtdIns3P) through its FYVE-type zinc finger. Positive regulator of osteosclast bone-resorbing activity, possibly by promoting late endosome-lysosome fusion by acting as an adapter protein between RAB7A on late endosomes and LAMP2 on primary lysosomes. This chain is RUN and FYVE domain-containing protein 4 (Rufy4), found in Mus musculus (Mouse).